The sequence spans 287 residues: ATP synthase gamma chain (287 aa).

Belongs to the ATPase gamma chain family. In terms of assembly, F-type ATPases have 2 components, CF(1) - the catalytic core - and CF(0) - the membrane proton channel. CF(1) has five subunits: alpha(3), beta(3), gamma(1), delta(1), epsilon(1). CF(0) has three main subunits: a, b and c.

It is found in the cell inner membrane. Produces ATP from ADP in the presence of a proton gradient across the membrane. The gamma chain is believed to be important in regulating ATPase activity and the flow of protons through the CF(0) complex. The chain is ATP synthase gamma chain from Geobacter metallireducens (strain ATCC 53774 / DSM 7210 / GS-15).